We begin with the raw amino-acid sequence, 377 residues long: Nitric oxide reductase FlRd-NAD(+) reductase (377 aa).

It belongs to the FAD-dependent oxidoreductase family. Requires FAD as cofactor.

The protein localises to the cytoplasm. The catalysed reaction is 2 reduced [nitric oxide reductase rubredoxin domain] + NAD(+) + H(+) = 2 oxidized [nitric oxide reductase rubredoxin domain] + NADH. It participates in nitrogen metabolism; nitric oxide reduction. In terms of biological role, one of at least two accessory proteins for anaerobic nitric oxide (NO) reductase. Reduces the rubredoxin moiety of NO reductase. This chain is Nitric oxide reductase FlRd-NAD(+) reductase, found in Escherichia coli (strain SE11).